Consider the following 349-residue polypeptide: Crinkler effector protein 5 (349 aa).

An N-terminal signal peptide occupies residues 1 to 17; that stretch reads MVKLFCSIVGVAGSPFS. Residues 18–57 form an LQLFLAK domain region; the sequence is VEVNEGKTVDDLKKAIKAENLDDPTLRNVAPKNLQLFLAK. Residues 58–108 form a DWL domain region; that stretch reads KGDAWLRYNEDLDTYLQSEIDTSSYLHMRASWKLSKPTLFGPDVSLGEDVV. The HVLVXXP motif motif lies at 109 to 115; it reads HVLVVVP.

Belongs to the Crinkler effector family.

The protein localises to the secreted. Its subcellular location is the host nucleus. Its function is as follows. Secreted effector that elicits necrosis in host plants, a characteristic of plant innate immunity. This chain is Crinkler effector protein 5, found in Phytophthora infestans (Potato late blight agent).